The chain runs to 522 residues: MNASNNISKFPDLDNSSKLIDHILDSDDSEELDELPDISSLVPSARAQSRKQYLKNDSSNSSTYRWNIDLLSSTATIDDSVAKRRKLAVQNLLQYDSTQTFQTGDEIDELIGKSVGSNVLNVLRSNPIYDDDLRYEYCSNSKARVPDWNTLKAECLKDNDLEFNEGIIPTTFGDLLSAKLVPLDIALSICSLQFFRSLGDTTCSEWIANLEKIFYSYKSSSNNLNQIVRFIFETTADMIGIDLAKRQVPIQLERTSASENLKSNLKIKVINFLKCCGTLYRFSDDTVRFEMIQDACRILIDNQVGSFCKWQFSQFMELPISLNPDFLISNIHKVSESPRVWVTILSSLSRSCQKFRKKIAFTLFVGKQSKNDDSDFSSLCQRLDEISASCNNDYTTLLYQIRTFGYAVDEKHFKTNERLECLLEKLRKIDLTISGSTDHLLLSRCEVKDCIHRLFMVLYYLNTNSAPELERIIESDLPNNNKQKDRYFKDKTSNLSMKENKSFSAKKVKKGKKKNKRQAYKR.

The segment covering 482 to 492 has biased composition (basic and acidic residues); sequence KQKDRYFKDKT. Positions 482–522 are disordered; that stretch reads KQKDRYFKDKTSNLSMKENKSFSAKKVKKGKKKNKRQAYKR. Over residues 504-522 the composition is skewed to basic residues; that stretch reads SAKKVKKGKKKNKRQAYKR.

In terms of assembly, component of the smc5/smc6 complex which consists of two subcomplexes, smc5-smc6-nse2 and nse1-nse2-nse4. Interacts with nse5.

The protein resides in the nucleus. It localises to the chromosome. Acts in a DNA repair pathway for removal of UV-induced DNA damage that is distinct from classical nucleotide excision repair and in repair of ionizing radiation damage. Functions in homologous recombination repair of DNA double strand breaks and in recovery of stalled replication forks. May prevent formation of excessive Holliday junctions or assist in their resolution. In Schizosaccharomyces pombe (strain 972 / ATCC 24843) (Fission yeast), this protein is Non-structural maintenance of chromosome element 6 (nse6).